Reading from the N-terminus, the 221-residue chain is ATP synthase subunit a 1 (221 aa).

The next 5 membrane-spanning stretches (helical) occupy residues 20–40 (LTIV…ALIT), 78–98 (YLPF…CTVI), 108–128 (LSTT…FGIA), 174–194 (MILV…MNIL), and 196–216 (LLTG…YIAA).

Belongs to the ATPase A chain family. As to quaternary structure, F-type ATPases have 2 components, CF(1) - the catalytic core - and CF(0) - the membrane proton channel. CF(1) has five subunits: alpha(3), beta(3), gamma(1), delta(1), epsilon(1). CF(0) has four main subunits: a, b, b' and c.

It is found in the cell inner membrane. In terms of biological role, key component of the proton channel; it plays a direct role in the translocation of protons across the membrane. In Chlorobaculum tepidum (strain ATCC 49652 / DSM 12025 / NBRC 103806 / TLS) (Chlorobium tepidum), this protein is ATP synthase subunit a 1.